Here is a 509-residue protein sequence, read N- to C-terminus: Zinc finger protein Aiolos (509 aa).

The tract at residues 1–85 (MEDIKPNVEL…PMGNAEEPEI (85 aa)) is disordered. Positions 10-20 (LKSTQEQSVPT) are enriched in polar residues. T20 is modified (phosphothreonine). The span at 56-72 (DSMKVKDEYSERDENVL) shows a compositional bias: basic and acidic residues. Residues K61, K73, and K100 each participate in a glycyl lysine isopeptide (Lys-Gly) (interchain with G-Cter in SUMO2) cross-link. 3 C2H2-type zinc fingers span residues 118–140 (MNCD…KRSH), 146–168 (FQCN…IKLH), and 174–196 (FKCH…LRTH). The C2H2-type 4; atypical zinc-finger motif lies at 202-224 (YKCEFCGRSYKQRSSLEEHKERC). K245 is covalently cross-linked (Glycyl lysine isopeptide (Lys-Gly) (interchain with G-Cter in SUMO2)). T326 bears the Phosphothreonine mark. The disordered stretch occupies residues 365 to 421 (HLPEKSLPSERGLSPTNSGHDSTDTDSNHEERQNHIYQQNPMVPPRARNGMPLLKEG). Phosphoserine is present on S378. The span at 385 to 398 (DSTDTDSNHEERQN) shows a compositional bias: basic and acidic residues. The C2H2-type 5 zinc finger occupies 452-474 (YRCDHCRVLFLDYVMFTIHMGCH). The segment at 452-504 (YRCDHCRVLFLDYVMFTIHMGCHGFRDPFECNMCGYRSHDRYEFSSHIARGEH) is mediates homodimerization and heterodimerization. The C2H2-type 6; atypical zinc-finger motif lies at 480-504 (FECNMCGYRSHDRYEFSSHIARGEH).

This sequence belongs to the Ikaros C2H2-type zinc-finger protein family. Homodimer. Heterodimer with other IKAROS family members. Interacts with IKZF4 and IKZF5. Interacts with IKZF1. Interacts with HRAS. Interacts with FOXP3; this interaction may be required for silencing target genes and regulating the suppressive activity of FOXP3-positive regulatory T-cells (Treg). Interacts with BCL21L; this interaction blocks the anti-apoptotic role of BCL21L. Associates with histone deacetylase complexes containing HDAC1, MTA2 and SIN3A.

The protein localises to the nucleus. It is found in the cytoplasm. In terms of biological role, transcription factor that plays an important role in the regulation of lymphocyte differentiation. Plays an essential role in regulation of B-cell differentiation, proliferation and maturation to an effector state. Involved in regulating BCL2 expression and controlling apoptosis in T-cells in an IL2-dependent manner. In Bos taurus (Bovine), this protein is Zinc finger protein Aiolos (IKZF3).